Reading from the N-terminus, the 806-residue chain is Protein bimA (806 aa).

2 TPR repeats span residues 76 to 109 and 127 to 160; these read LGCS…WTSR and AAVL…NPFM. 3 disordered regions span residues 202 to 348, 353 to 372, and 401 to 460; these read VLPP…HRLG, TVSG…QGVG, and REVK…ASSK. Residues 224-237 are compositionally biased toward polar residues; the sequence is AGTTRSDSTSTHGS. A compositionally biased stretch (low complexity) spans 246–257; that stretch reads GSTVSVASSGTG. A bimA domain region spans residues 260–399; that stretch reads LPREGMETPG…ISSTALGVKE (140 aa). The span at 328–348 shows a compositional bias: basic and acidic residues; sequence TKFESDEGHTERDAGMGHRLG. The span at 408–421 shows a compositional bias: polar residues; the sequence is TTGNKARTTTSSNV. Residues 432–445 show a composition bias toward basic and acidic residues; sequence HAGEIHDGDSKEYR. The span at 446-459 shows a compositional bias: low complexity; it reads GTSSTSNGSQNASS. 6 TPR repeats span residues 513 to 546, 581 to 614, 616 to 648, 649 to 682, 684 to 716, and 751 to 784; these read PWVL…APSR, PEAW…DPHF, YGFT…DSRH, YNAW…NPSN, VLIC…APHS, and ANVH…DPKA.

It belongs to the APC3/CDC27 family.

The protein localises to the nucleus. In terms of biological role, required for the completion of mitosis in Aspergillus nidulans. The polypeptide is Protein bimA (bimA) (Emericella nidulans (strain FGSC A4 / ATCC 38163 / CBS 112.46 / NRRL 194 / M139) (Aspergillus nidulans)).